Reading from the N-terminus, the 437-residue chain is Glutamyl-tRNA reductase (437 aa).

Substrate is bound by residues threonine 49 to arginine 52, serine 109, glutamate 114 to glutamine 116, and glutamine 120. Cysteine 50 (nucleophile) is an active-site residue. Glycine 198–serine 203 lines the NADP(+) pocket.

It belongs to the glutamyl-tRNA reductase family. Homodimer.

It catalyses the reaction (S)-4-amino-5-oxopentanoate + tRNA(Glu) + NADP(+) = L-glutamyl-tRNA(Glu) + NADPH + H(+). The protein operates within porphyrin-containing compound metabolism; protoporphyrin-IX biosynthesis; 5-aminolevulinate from L-glutamyl-tRNA(Glu): step 1/2. It participates in porphyrin-containing compound metabolism; chlorophyll biosynthesis. Catalyzes the NADPH-dependent reduction of glutamyl-tRNA(Glu) to glutamate 1-semialdehyde (GSA). In Prochlorococcus marinus (strain SARG / CCMP1375 / SS120), this protein is Glutamyl-tRNA reductase.